The primary structure comprises 249 residues: Putative TrmH family tRNA/rRNA methyltransferase YacO (249 aa).

Residues Gly-198, Leu-218, and Leu-227 each contribute to the S-adenosyl-L-methionine site.

It belongs to the class IV-like SAM-binding methyltransferase superfamily. RNA methyltransferase TrmH family.

The sequence is that of Putative TrmH family tRNA/rRNA methyltransferase YacO (yacO) from Bacillus subtilis (strain 168).